Consider the following 29-residue polypeptide: Dermaseptin-J5 (29 aa).

The residue at position 29 (valine 29) is a Valine amide.

As to expression, expressed by the skin glands.

It is found in the secreted. Its function is as follows. Has antimicrobial activity. In Phasmahyla jandaia (Jandaia leaf frog), this protein is Dermaseptin-J5.